We begin with the raw amino-acid sequence, 597 residues long: Inactive metallocarboxypeptidase ECM14 (597 aa).

The N-terminal stretch at 1–21 (MRLFTHGQVLALLAFVNTISA) is a signal peptide. Residues 22 to 174 (TPSFSTNSYP…QTIYESYPSP (153 aa)) constitute a propeptide that is removed on maturation. Positions 170 to 179 (SYPSPSQSPS) are enriched in low complexity. The tract at residues 170–189 (SYPSPSQSPSGRERGFLPSG) is disordered. Positions 202-522 (NYQPLSVIVP…NAVMMLGRFL (321 aa)) constitute a Peptidase M14 domain. Residues histidine 264 and glutamate 267 each contribute to the Zn(2+) site. Substrate-binding positions include 264–267 (HARE), arginine 322, and 339–340 (DR). Cysteine 333 and cysteine 356 form a disulfide bridge. Asparagine 349 carries N-linked (GlcNAc...) asparagine glycosylation. Histidine 396 contacts Zn(2+). A substrate-binding site is contributed by 397 to 398 (SY). A disordered region spans residues 543 to 597 (KDDKPILNDDDDDDADTNDDGIGRKDDSWIPDEYKGDNDRDESDGGWAFRRLRKR). Positions 550–561 (NDDDDDDADTND) are enriched in acidic residues. Basic and acidic residues predominate over residues 563–580 (GIGRKDDSWIPDEYKGDN).

The protein belongs to the peptidase M14 family. Zn(2+) is required as a cofactor.

The protein resides in the vacuole. It is found in the secreted. In terms of biological role, inactive carboxypeptidase that may play a role in cell wall organization and biogenesis. This is Inactive metallocarboxypeptidase ECM14 (ECM14) from Ajellomyces capsulatus (strain G186AR / H82 / ATCC MYA-2454 / RMSCC 2432) (Darling's disease fungus).